A 283-amino-acid polypeptide reads, in one-letter code: MRTQWPSPAKLNLFLYITGQRADGYHTLQTLFQFLDYGDTISIELRDDGDIRLLTPVEGVEHEDNLIVRAARLLMKTAADSGRLSTGSGANISIDKRLPMGGGLGGGSSNAATVLVALNHLWQCGLSMDELAEMGLTLGADVPVFVRGHAAFAEGVGEILTPVDPPEKWYLVAHPGVSIPTPVIFKDPELPRNTPKRSIETLLKCEFSNDCEVIARKRFREVDAVLSWLLEYAPSRLTGTGACVFAEFDTESEARQVLEQAPEWLNGFVAKGVNLSPLHRAML.

The active site involves lysine 10. 99 to 109 (PMGGGLGGGSS) contacts ATP. Aspartate 141 is a catalytic residue.

The protein belongs to the GHMP kinase family. IspE subfamily. Homodimer.

It catalyses the reaction 4-CDP-2-C-methyl-D-erythritol + ATP = 4-CDP-2-C-methyl-D-erythritol 2-phosphate + ADP + H(+). It participates in isoprenoid biosynthesis; isopentenyl diphosphate biosynthesis via DXP pathway; isopentenyl diphosphate from 1-deoxy-D-xylulose 5-phosphate: step 3/6. In terms of biological role, catalyzes the phosphorylation of the position 2 hydroxy group of 4-diphosphocytidyl-2C-methyl-D-erythritol. This chain is 4-diphosphocytidyl-2-C-methyl-D-erythritol kinase, found in Escherichia coli O81 (strain ED1a).